Here is a 210-residue protein sequence, read N- to C-terminus: Outer-membrane lipoprotein LolB (210 aa).

A signal peptide spans 1–29 (MSLISNNEERSLRVRYCIAIALSALLISG). A lipid anchor (N-palmitoyl cysteine) is attached at cysteine 30. Cysteine 30 carries S-diacylglycerol cysteine lipidation.

Belongs to the LolB family. As to quaternary structure, monomer.

It localises to the cell outer membrane. Functionally, plays a critical role in the incorporation of lipoproteins in the outer membrane after they are released by the LolA protein. The sequence is that of Outer-membrane lipoprotein LolB from Coxiella burnetii (strain CbuG_Q212) (Coxiella burnetii (strain Q212)).